Reading from the N-terminus, the 368-residue chain is Histidinol-phosphate aminotransferase (368 aa).

Position 229 is an N6-(pyridoxal phosphate)lysine (Lys-229).

It belongs to the class-II pyridoxal-phosphate-dependent aminotransferase family. Histidinol-phosphate aminotransferase subfamily. As to quaternary structure, homodimer. Requires pyridoxal 5'-phosphate as cofactor.

It carries out the reaction L-histidinol phosphate + 2-oxoglutarate = 3-(imidazol-4-yl)-2-oxopropyl phosphate + L-glutamate. Its pathway is amino-acid biosynthesis; L-histidine biosynthesis; L-histidine from 5-phospho-alpha-D-ribose 1-diphosphate: step 7/9. The sequence is that of Histidinol-phosphate aminotransferase from Acidovorax sp. (strain JS42).